A 160-amino-acid polypeptide reads, in one-letter code: uncharacterized protein (160 aa).

Residues 37–110 form the Cupin type-2 domain; sequence LMSLKPKEDI…TDYLKLYTIY (74 aa).

It is found in the virion. This is an uncharacterized protein from Acanthamoeba polyphaga mimivirus (APMV).